Reading from the N-terminus, the 429-residue chain is Type II methyltransferase M.AgeI (429 aa).

The SAM-dependent MTase C5-type domain maps to 1 to 429 (MKTIDLFCGA…MAETIKVAIS (429 aa)). Residue Cys80 is part of the active site.

Belongs to the class I-like SAM-binding methyltransferase superfamily. C5-methyltransferase family.

The enzyme catalyses a 2'-deoxycytidine in DNA + S-adenosyl-L-methionine = a 5-methyl-2'-deoxycytidine in DNA + S-adenosyl-L-homocysteine + H(+). Its function is as follows. A methylase, recognizes the double-stranded sequence 5'-ACCGGT-3', methylates C-3 on both strands, and protects the DNA from cleavage by the AgeI endonuclease. This is Type II methyltransferase M.AgeI (ageIM) from Thalassovita gelatinovora (Thalassobius gelatinovorus).